The primary structure comprises 343 residues: Ribosomal RNA small subunit methyltransferase, chloroplastic (343 aa).

Residues 1-48 (MMNAVITSATINCNSLSPSWTCGDNSPSKLLLGEISAALSRRRTVKVS) constitute a chloroplast transit peptide. Residues His78, Met80, Gly105, Glu126, Asp151, and Asn183 each coordinate S-adenosyl-L-methionine.

It belongs to the class I-like SAM-binding methyltransferase superfamily. rRNA adenine N(6)-methyltransferase family.

It is found in the plastid. Its subcellular location is the chloroplast. Its function is as follows. Required for methylation of the 3' adenosines in the small subunit of plastid rRNA. Essential for chloroplast biogenesis at low temperatures. This is Ribosomal RNA small subunit methyltransferase, chloroplastic from Arabidopsis thaliana (Mouse-ear cress).